A 594-amino-acid polypeptide reads, in one-letter code: Actin-histidine N-methyltransferase (594 aa).

The disordered stretch occupies residues 1–23; the sequence is MGKKSRVKTQKSGTGATASVSPK. Residues 10-23 are compositionally biased toward polar residues; sequence QKSGTGATASVSPK. S-adenosyl-L-methionine is bound by residues Arg-75, 104-106, Arg-254, 275-279, and 325-327; these read EGF, DMCNH, and SGF. The SET domain occupies 94–314; it reads EGFEMVSFKE…AGEQIYIFYG (221 aa). A disordered region spans residues 553 to 594; the sequence is INGENSIPNGTRLEKEDLNQEQSKRVTEDAKEPSDSTEEVKE. Over residues 564–594 the composition is skewed to basic and acidic residues; it reads RLEKEDLNQEQSKRVTEDAKEPSDSTEEVKE.

This sequence belongs to the class V-like SAM-binding methyltransferase superfamily. SETD3 actin-histidine methyltransferase family. Interacts with MYOD1. Phosphorylated by GSK3B, which is required for recognition by the SCF(FBXW7) complex and subsequent degradation. In terms of processing, ubiquitinated by the SCF(FBXW7) complex following phosphorylation by GSK3B, leading to its degradation by the proteasome.

It localises to the cytoplasm. The protein resides in the nucleus. It catalyses the reaction L-histidyl-[protein] + S-adenosyl-L-methionine = N(tele)-methyl-L-histidyl-[protein] + S-adenosyl-L-homocysteine + H(+). Protein-histidine N-methyltransferase that specifically mediates 3-methylhistidine (tele-methylhistidine) methylation of actin at 'His-73'. Histidine methylation of actin is required for smooth muscle contraction of the laboring uterus during delivery. Does not have protein-lysine N-methyltransferase activity and probably only catalyzes histidine methylation of actin. This chain is Actin-histidine N-methyltransferase, found in Rhinolophus ferrumequinum (Greater horseshoe bat).